We begin with the raw amino-acid sequence, 359 residues long: Glycerol-1-phosphate dehydrogenase [NAD(P)+] (359 aa).

Residues 107-111 (GRVID) and 129-132 (TAAS) contribute to the NAD(+) site. Substrate is bound at residue Asp-134. Residue Ser-138 participates in NAD(+) binding. Position 181 (Asp-181) interacts with substrate. Zn(2+)-binding residues include Asp-181 and His-261. His-265 serves as a coordination point for substrate. A Zn(2+)-binding site is contributed by His-277.

Belongs to the glycerol-1-phosphate dehydrogenase family. It depends on Zn(2+) as a cofactor.

The protein localises to the cytoplasm. The catalysed reaction is sn-glycerol 1-phosphate + NAD(+) = dihydroxyacetone phosphate + NADH + H(+). The enzyme catalyses sn-glycerol 1-phosphate + NADP(+) = dihydroxyacetone phosphate + NADPH + H(+). It functions in the pathway membrane lipid metabolism; glycerophospholipid metabolism. In terms of biological role, catalyzes the NAD(P)H-dependent reduction of dihydroxyacetonephosphate (DHAP or glycerone phosphate) to glycerol 1-phosphate (G1P). The G1P thus generated is used as the glycerophosphate backbone of phospholipids in the cellular membranes of Archaea. This is Glycerol-1-phosphate dehydrogenase [NAD(P)+] from Methanosphaerula palustris (strain ATCC BAA-1556 / DSM 19958 / E1-9c).